Here is a 293-residue protein sequence, read N- to C-terminus: Triosephosphate isomerase (293 aa).

25-27 contacts substrate; the sequence is NWK. Catalysis depends on histidine 117, which acts as the Electrophile. Residue glutamate 218 is the Proton acceptor of the active site.

The protein belongs to the triosephosphate isomerase family. Homodimer.

It localises to the cytoplasm. It catalyses the reaction D-glyceraldehyde 3-phosphate = dihydroxyacetone phosphate. Its pathway is carbohydrate biosynthesis; gluconeogenesis. It participates in carbohydrate degradation; glycolysis; D-glyceraldehyde 3-phosphate from glycerone phosphate: step 1/1. Its function is as follows. Involved in the gluconeogenesis. Catalyzes stereospecifically the conversion of dihydroxyacetone phosphate (DHAP) to D-glyceraldehyde-3-phosphate (G3P). This chain is Triosephosphate isomerase, found in Tropheryma whipplei (strain Twist) (Whipple's bacillus).